Consider the following 417-residue polypeptide: Tyrosine--tRNA ligase (417 aa).

Tyr-39 serves as a coordination point for L-tyrosine. A 'HIGH' region motif is present at residues 44–53 (PTAPSLHAGG). Residues Tyr-176 and Gln-180 each contribute to the L-tyrosine site. The 'KMSKS' region signature appears at 236–240 (KMGKS). Position 239 (Lys-239) interacts with ATP. The S4 RNA-binding domain occupies 350–417 (IGVLALMVLA…KKRHVLIRPA (68 aa)).

Belongs to the class-I aminoacyl-tRNA synthetase family. TyrS type 1 subfamily. As to quaternary structure, homodimer.

The protein resides in the cytoplasm. The enzyme catalyses tRNA(Tyr) + L-tyrosine + ATP = L-tyrosyl-tRNA(Tyr) + AMP + diphosphate + H(+). Catalyzes the attachment of tyrosine to tRNA(Tyr) in a two-step reaction: tyrosine is first activated by ATP to form Tyr-AMP and then transferred to the acceptor end of tRNA(Tyr). In Brucella suis biovar 1 (strain 1330), this protein is Tyrosine--tRNA ligase.